Here is a 329-residue protein sequence, read N- to C-terminus: Malate dehydrogenase (329 aa).

12–18 lines the NAD(+) pocket; the sequence is GAAGQIG. The substrate site is built by Arg-93 and Arg-99. NAD(+)-binding positions include Asn-106, Gln-113, and 130 to 132; that span reads VGN. Asn-132 and Arg-163 together coordinate substrate. Residue His-188 is the Proton acceptor of the active site.

It belongs to the LDH/MDH superfamily. MDH type 2 family.

It carries out the reaction (S)-malate + NAD(+) = oxaloacetate + NADH + H(+). In terms of biological role, catalyzes the reversible oxidation of malate to oxaloacetate. The chain is Malate dehydrogenase from Frankia alni (strain DSM 45986 / CECT 9034 / ACN14a).